A 185-amino-acid chain; its full sequence is Ribosome-recycling factor (185 aa).

The protein belongs to the RRF family.

The protein localises to the cytoplasm. In terms of biological role, responsible for the release of ribosomes from messenger RNA at the termination of protein biosynthesis. May increase the efficiency of translation by recycling ribosomes from one round of translation to another. The polypeptide is Ribosome-recycling factor (Streptococcus gordonii (strain Challis / ATCC 35105 / BCRC 15272 / CH1 / DL1 / V288)).